A 515-amino-acid polypeptide reads, in one-letter code: Putative ribose/galactose/methyl galactoside import ATP-binding protein (515 aa).

ABC transporter domains follow at residues 25–261 (LEVL…VGRE) and 268–515 (LREK…SGLN). 57–64 (GENGAGKS) is a binding site for ATP.

Belongs to the ABC transporter superfamily. Carbohydrate importer 2 (CUT2) (TC 3.A.1.2) family.

Its subcellular location is the cell inner membrane. The catalysed reaction is D-ribose(out) + ATP + H2O = D-ribose(in) + ADP + phosphate + H(+). It carries out the reaction D-galactose(out) + ATP + H2O = D-galactose(in) + ADP + phosphate + H(+). Functionally, part of an ABC transporter complex involved in carbohydrate import. Could be involved in ribose, galactose and/or methyl galactoside import. Responsible for energy coupling to the transport system. This chain is Putative ribose/galactose/methyl galactoside import ATP-binding protein, found in Pseudomonas fluorescens (strain ATCC BAA-477 / NRRL B-23932 / Pf-5).